Here is a 249-residue protein sequence, read N- to C-terminus: Adapter protein MecA (249 aa).

Belongs to the MecA family. In terms of assembly, homodimer.

Enables the recognition and targeting of unfolded and aggregated proteins to the ClpC protease or to other proteins involved in proteolysis. The sequence is that of Adapter protein MecA from Streptococcus thermophilus (strain ATCC BAA-250 / LMG 18311).